The sequence spans 565 residues: Amino-acid acetyltransferase, mitochondrial (565 aa).

Positions 38–58 (DIATATPAATPSDGAQPPAQN) are disordered. The region spanning 352-540 (LPVRVLRSME…EFGGGRLVRV (189 aa)) is the N-acetyltransferase domain.

This sequence belongs to the acetyltransferase family.

It localises to the mitochondrion. The catalysed reaction is L-glutamate + acetyl-CoA = N-acetyl-L-glutamate + CoA + H(+). It functions in the pathway amino-acid biosynthesis; L-arginine biosynthesis; N(2)-acetyl-L-ornithine from L-glutamate: step 1/4. Its function is as follows. N-acetylglutamate synthase involved in arginine biosynthesis. The chain is Amino-acid acetyltransferase, mitochondrial (ARG2) from Cryptococcus neoformans var. neoformans serotype D (strain B-3501A) (Filobasidiella neoformans).